Reading from the N-terminus, the 1621-residue chain is Lysophospholipase NTE1 (1621 aa).

At 1 to 12 (MSSIPTPPDANG) the chain is on the cytoplasmic side. Residues 13 to 33 (NPLIALAVAVIYAILYVLQGV) form a helical membrane-spanning segment. Over 34–59 (KYGVSLLTIGIPSCIVRMLQYSLTIS) the chain is Lumenal. The chain crosses the membrane as a helical span at residues 60–80 (LGFPHLLALFAGALLALFFLI). The Cytoplasmic segment spans residues 81–1621 (RYRYLTRYAQ…RGNRLRRMSI (1541 aa)). Disordered regions lie at residues 188–209 (PDAS…TRPS), 250–379 (EGEE…SVPR), 545–566 (QTAT…LDET), 648–667 (WNLN…QRDD), 711–735 (VSAL…GSTR), 772–791 (DDEA…GASG), and 839–870 (FRST…ERPF). Composition is skewed to low complexity over residues 195–209 (TPTP…TRPS) and 348–361 (RRSQ…RLNS). A nucleoside 3',5'-cyclic phosphate is bound by residues 788 to 907 (GASG…GYLS) and 951 to 1070 (RLLS…IAGR). Positions 839–867 (FRSTSSNQENPNSTPGSKHRQSSFGSSNE) are enriched in polar residues. Positions 1316-1480 (LVLGGGGARG…MDNTPIQPLR (165 aa)) constitute a PNPLA domain. Residues 1320–1325 (GGGARG) carry the GXGXXG motif. The GXSXG motif lies at 1347–1351 (GCSIG). The active-site Nucleophile is the S1349. D1467 functions as the Proton acceptor in the catalytic mechanism. Residues 1467–1469 (DGG) carry the DGA/G motif.

Belongs to the NTE family.

The protein resides in the endoplasmic reticulum membrane. The enzyme catalyses a 1-acyl-sn-glycero-3-phosphocholine + H2O = sn-glycerol 3-phosphocholine + a fatty acid + H(+). Its activity is regulated as follows. Inhibited by organophosphorus esters. Functionally, intracellular phospholipase B that catalyzes the double deacylation of phosphatidylcholine (PC) to glycerophosphocholine (GroPCho). Plays an important role in membrane lipid homeostasis. Responsible for the rapid PC turnover in response to inositol, elevated temperatures, or when choline is present in the growth medium. The polypeptide is Lysophospholipase NTE1 (NTE1) (Cryptococcus neoformans var. neoformans serotype D (strain B-3501A) (Filobasidiella neoformans)).